Consider the following 129-residue polypeptide: UPF0102 protein Mnod_0024 (129 aa).

The protein belongs to the UPF0102 family.

The protein is UPF0102 protein Mnod_0024 of Methylobacterium nodulans (strain LMG 21967 / CNCM I-2342 / ORS 2060).